A 185-amino-acid polypeptide reads, in one-letter code: MSRIGKQPIAVPSGVTVNTQSGVFKVKGPKGELTVPFNPDLTIREDNGQLLVERPSDRQEHRALHGLTRTLVANAVKGVSDGFVINLELRGVGYRAKLNGKALELTIGYSHPVVIDPPAGVTFAVPEPTKIDVSGIDKQLVGQVAANVREVRKPDAYHGKGVRFVGQQIALKAGKAGATGGKGKK.

Belongs to the universal ribosomal protein uL6 family. In terms of assembly, part of the 50S ribosomal subunit.

Functionally, this protein binds to the 23S rRNA, and is important in its secondary structure. It is located near the subunit interface in the base of the L7/L12 stalk, and near the tRNA binding site of the peptidyltransferase center. This is Large ribosomal subunit protein uL6 from Deinococcus deserti (strain DSM 17065 / CIP 109153 / LMG 22923 / VCD115).